The following is a 398-amino-acid chain: Bifunctional enzyme IspD/IspF (398 aa).

The interval 1 to 234 is 2-C-methyl-D-erythritol 4-phosphate cytidylyltransferase; the sequence is MPNPPRTAAI…SRLTALLGDI (234 aa). Residues 235 to 398 are 2-C-methyl-D-erythritol 2,4-cyclodiphosphate synthase; that stretch reads RTGTGYDVHA…LPWGAEGLAG (164 aa). The a divalent metal cation site is built by aspartate 241 and histidine 243. 4-CDP-2-C-methyl-D-erythritol 2-phosphate contacts are provided by residues 241-243 and 267-268; these read DVH and HS. Residue histidine 275 coordinates a divalent metal cation. Residues 289–291, 365–368, phenylalanine 372, and arginine 375 each bind 4-CDP-2-C-methyl-D-erythritol 2-phosphate; these read DIG and TTSE.

This sequence in the N-terminal section; belongs to the IspD/TarI cytidylyltransferase family. IspD subfamily. It in the C-terminal section; belongs to the IspF family. It depends on a divalent metal cation as a cofactor.

It catalyses the reaction 2-C-methyl-D-erythritol 4-phosphate + CTP + H(+) = 4-CDP-2-C-methyl-D-erythritol + diphosphate. It carries out the reaction 4-CDP-2-C-methyl-D-erythritol 2-phosphate = 2-C-methyl-D-erythritol 2,4-cyclic diphosphate + CMP. Its pathway is isoprenoid biosynthesis; isopentenyl diphosphate biosynthesis via DXP pathway; isopentenyl diphosphate from 1-deoxy-D-xylulose 5-phosphate: step 2/6. It functions in the pathway isoprenoid biosynthesis; isopentenyl diphosphate biosynthesis via DXP pathway; isopentenyl diphosphate from 1-deoxy-D-xylulose 5-phosphate: step 4/6. Bifunctional enzyme that catalyzes the formation of 4-diphosphocytidyl-2-C-methyl-D-erythritol from CTP and 2-C-methyl-D-erythritol 4-phosphate (MEP) (IspD), and catalyzes the conversion of 4-diphosphocytidyl-2-C-methyl-D-erythritol 2-phosphate (CDP-ME2P) to 2-C-methyl-D-erythritol 2,4-cyclodiphosphate (ME-CPP) with a corresponding release of cytidine 5-monophosphate (CMP) (IspF). The sequence is that of Bifunctional enzyme IspD/IspF from Rhodopseudomonas palustris (strain BisB5).